A 305-amino-acid chain; its full sequence is Chromatin modification-related protein png2 (305 aa).

Residues 135–239 form a disordered region; the sequence is TVTPQTSERR…PLVKHDTLDS (105 aa). Residues 153-167 show a composition bias toward low complexity; it reads NQHSQQYSSQERSSS. 2 stretches are compositionally biased toward polar residues: residues 168–183 and 195–210; these read YNNF…SYHT and KSSS…APQS. The residue at position 181 (Tyr181) is a Phosphotyrosine. Thr183 is subject to Phosphothreonine. 2 positions are modified to phosphoserine: Ser197 and Ser198. Over residues 211–223 the composition is skewed to basic and acidic residues; sequence TERRPVRRSESRL. A PHD-type zinc finger spans residues 248 to 297; the sequence is QLYCYCQQVSYGQMIGCDNENCKREWFHLPCVGLVEPPKGIWYCKECEEL. Cys251, Cys253, Cys264, Cys269, His275, Cys278, Cys291, and Cys294 together coordinate Zn(2+).

The protein belongs to the ING family. Interacts with H3K4me3 and to a lesser extent with H3K4me2. Component of the clr6 histone deacetylase complex I'composed of at least clr6, png2, prw1, pst1 and sds3.

The protein resides in the cytoplasm. It localises to the nucleus. Its function is as follows. Component of the clr6 histone deacetylase complex I' responsible for the deacetylation of lysine residues on the N-terminal part of the core histones (H2A, H2B, H3 and H4). Histone deacetylation gives a tag for epigenetic repression and plays an important role in transcriptional regulation, cell cycle progression and developmental events. Has a role in silencing of mating type genes. This chain is Chromatin modification-related protein png2 (png2), found in Schizosaccharomyces pombe (strain 972 / ATCC 24843) (Fission yeast).